The primary structure comprises 628 residues: NUAK family SNF1-like kinase 2 (628 aa).

N-acetylmethionine is present on M1. One can recognise a Protein kinase domain in the interval 53-303; it reads YEFLETLGKG…LEDVASHWWV (251 aa). Residues 59 to 67 and K81 contribute to the ATP site; that span reads LGKGTYGKV. The Proton acceptor role is filled by D175. At T208 the chain carries Phosphothreonine; by LKB1. Positions 355–493 are disordered; it reads KQHAPGGGST…KEQKPPQASG (139 aa). The residue at position 435 (S435) is a Phosphoserine. Over residues 457–469 the composition is skewed to low complexity; sequence SGYYSSPEPSESG. S523, S544, S547, and S573 each carry phosphoserine. Residues 531–562 form a disordered region; sequence RPLARASRPSGAVSEDSILSSESFDQLDLPER.

Belongs to the protein kinase superfamily. CAMK Ser/Thr protein kinase family. SNF1 subfamily. The cofactor is Mg(2+). Phosphorylated at Thr-208 by STK11/LKB1 in complex with STE20-related adapter-alpha (STRADA) pseudo kinase and CAB39. Autophosphorylation is also possible at Thr-208.

The enzyme catalyses L-seryl-[protein] + ATP = O-phospho-L-seryl-[protein] + ADP + H(+). The catalysed reaction is L-threonyl-[protein] + ATP = O-phospho-L-threonyl-[protein] + ADP + H(+). Activated by phosphorylation on Thr-208. Functionally, stress-activated kinase involved in tolerance to glucose starvation. Induces cell-cell detachment by increasing F-actin conversion to G-actin. Expression is induced by CD95 or TNF-alpha, via NF-kappa-B. Protects cells from CD95-mediated apoptosis and is required for the increased motility and invasiveness of CD95-activated tumor cells. Phosphorylates LATS1 and LATS2. Plays a key role in neural tube closure during embryonic development through LATS2 phosphorylation and regulation of the nuclear localization of YAP1 a critical downstream regulatory target in the Hippo signaling pathway. The sequence is that of NUAK family SNF1-like kinase 2 from Homo sapiens (Human).